A 408-amino-acid polypeptide reads, in one-letter code: MWAFSELPMPLLINLIVSLLGFVATVTLIPAFRGHFIAARLCGQDLNKTSRQQIPESQGVISGAVFLIILFCFIPFPFLNCFVKEQCKAFPHHEFVALIGALLAICCMIFLGFADDVLNLRWRHKLLLPTAASLPLLMVYFTNFGNTTIVVPKPFRPILGLHLDLGILYYVYMGLLAVFCTNAINILAGINGLEAGQSLVISASIIVFNLVELEGDCRDDHVFSLYFMIPFFFTTLGLLYHNWYPSRVFVGDTFCYFAGMTFAVVGILGHFSKTMLLFFMPQVFNFLYSLPQLLHIIPCPRHRIPRLNIKTGKLEMSYSKFKTKSLSFLGTFILKVAESLQLVTVHQSETEDGEFTECNNMTLINLLLKVLGPIHERNLTLLLLLLQILGSAITFSIRYQLVRLFYDV.

Residues 1–10 are Lumenal-facing; sequence MWAFSELPMP. The helical transmembrane segment at 11 to 38 threads the bilayer; that stretch reads LLINLIVSLLGFVATVTLIPAFRGHFIA. Residues 39–58 are Cytoplasmic-facing; it reads ARLCGQDLNKTSRQQIPESQ. UDP-N-acetyl-alpha-D-glucosamine-binding positions include 44–46 and Glu-56; that span reads QDL. Leu-46 is a tunicamycin A1 binding site. Residues 59 to 78 traverse the membrane as a helical segment; it reads GVISGAVFLIILFCFIPFPF. Residues 79–91 are Lumenal-facing; that stretch reads LNCFVKEQCKAFP. A helical transmembrane segment spans residues 92–118; it reads HHEFVALIGALLAICCMIFLGFADDVL. Asn-119 lines the tunicamycin A1 pocket. The Cytoplasmic segment spans residues 119–121; sequence NLR. A helical membrane pass occupies residues 122–143; sequence WRHKLLLPTAASLPLLMVYFTN. A dolichyl phosphate-binding site is contributed by Lys-125. At 144-166 the chain is on the lumenal side; sequence FGNTTIVVPKPFRPILGLHLDLG. Asn-146 is a glycosylation site (N-linked (GlcNAc...) asparagine). Residues 167–186 traverse the membrane as a helical segment; it reads ILYYVYMGLLAVFCTNAINI. 178-186 is a dolichyl phosphate binding site; the sequence is VFCTNAINI. Position 185 (Asn-185) interacts with tunicamycin A1. Asn-185 provides a ligand contact to Mg(2+). Over 187 to 192 the chain is Cytoplasmic; that stretch reads LAGING. Residue Asn-191 coordinates UDP-N-acetyl-alpha-D-glucosamine. The chain crosses the membrane as a helical span at residues 193 to 213; sequence LEAGQSLVISASIIVFNLVEL. Residues 214–218 lie on the Lumenal side of the membrane; the sequence is EGDCR. A helical transmembrane segment spans residues 219–242; the sequence is DDHVFSLYFMIPFFFTTLGLLYHN. Residues 243–250 are Cytoplasmic-facing; the sequence is WYPSRVFV. Residues 251-269 form a helical membrane-spanning segment; sequence GDTFCYFAGMTFAVVGILG. Position 252 (Asp-252) interacts with tunicamycin A1. Asp-252 provides a ligand contact to Mg(2+). At 270–271 the chain is on the lumenal side; it reads HF. Residues 272–293 traverse the membrane as a helical segment; sequence SKTMLLFFMPQVFNFLYSLPQL. Residues 294 to 375 lie on the Cytoplasmic side of the membrane; it reads LHIIPCPRHR…LLLKVLGPIH (82 aa). 301–303 provides a ligand contact to UDP-N-acetyl-alpha-D-glucosamine; it reads RHR. Arg-303 serves as a coordination point for tunicamycin A1. A helical membrane pass occupies residues 376 to 400; the sequence is ERNLTLLLLLLQILGSAITFSIRYQ. Topologically, residues 401 to 408 are lumenal; that stretch reads LVRLFYDV.

This sequence belongs to the glycosyltransferase 4 family. In terms of assembly, homodimer. Mg(2+) serves as cofactor.

It is found in the endoplasmic reticulum membrane. The enzyme catalyses a di-trans,poly-cis-dolichyl phosphate + UDP-N-acetyl-alpha-D-glucosamine = an N-acetyl-alpha-D-glucosaminyl-diphospho-di-trans,poly-cis-dolichol + UMP. It functions in the pathway protein modification; protein glycosylation. Its activity is regulated as follows. Inhibited by natural nucleoside antibiotic tunicamycin, which acts as a structural analog and competitor of UDP-GlcNAc. Activated by mannosylphosphoryldolichol and phospholipids such as phosphatidylglycerol and phosphatidylcholine. In terms of biological role, UDP-N-acetylglucosamine--dolichyl-phosphate N-acetylglucosaminephosphotransferase that operates in the biosynthetic pathway of dolichol-linked oligosaccharides, the glycan precursors employed in protein asparagine (N)-glycosylation. The assembly of dolichol-linked oligosaccharides begins on the cytosolic side of the endoplasmic reticulum membrane and finishes in its lumen. The sequential addition of sugars to dolichol pyrophosphate produces dolichol-linked oligosaccharides containing fourteen sugars, including two GlcNAcs, nine mannoses and three glucoses. Once assembled, the oligosaccharide is transferred from the lipid to nascent proteins by oligosaccharyltransferases. Catalyzes the initial step of dolichol-linked oligosaccharide biosynthesis, transfering GlcNAc-1-P from cytosolic UDP-GlcNAc onto the carrier lipid dolichyl phosphate (P-dolichol), yielding GlcNAc-P-P-dolichol embedded in the cytoplasmic leaflet of the endoplasmic reticulum membrane. The chain is UDP-N-acetylglucosamine--dolichyl-phosphate N-acetylglucosaminephosphotransferase from Homo sapiens (Human).